A 377-amino-acid polypeptide reads, in one-letter code: Chaperone protein DnaJ (377 aa).

In terms of domain architecture, J spans 5–70; that stretch reads DFYEVLGVER…SKRAAYDQYG (66 aa). The CR-type zinc-finger motif lies at 136–214; that stretch reads GTTVTIRVPT…CHGQGRVEEQ (79 aa). C149, C152, C166, C169, C188, C191, C202, and C205 together coordinate Zn(2+). CXXCXGXG motif repeat units follow at residues 149 to 156, 166 to 173, 188 to 195, and 202 to 209; these read CKTCNGSG, CTTCGGIG, CPRCHGTG, and CGSCHGQG.

This sequence belongs to the DnaJ family. Homodimer. Requires Zn(2+) as cofactor.

Its subcellular location is the cytoplasm. Functionally, participates actively in the response to hyperosmotic and heat shock by preventing the aggregation of stress-denatured proteins and by disaggregating proteins, also in an autonomous, DnaK-independent fashion. Unfolded proteins bind initially to DnaJ; upon interaction with the DnaJ-bound protein, DnaK hydrolyzes its bound ATP, resulting in the formation of a stable complex. GrpE releases ADP from DnaK; ATP binding to DnaK triggers the release of the substrate protein, thus completing the reaction cycle. Several rounds of ATP-dependent interactions between DnaJ, DnaK and GrpE are required for fully efficient folding. Also involved, together with DnaK and GrpE, in the DNA replication of plasmids through activation of initiation proteins. The chain is Chaperone protein DnaJ from Pseudomonas aeruginosa (strain LESB58).